Reading from the N-terminus, the 216-residue chain is Sugar transporter SWEET1 (216 aa).

A run of 7 helical transmembrane segments spans residues 3-23 (WMWL…SSGL), 36-56 (ENIQ…WFYY), 65-85 (LMIV…AYLL), 96-116 (QVLV…LWIL), 125-145 (LGLF…ADLA), 157-177 (SFPL…YGLV), and 181-201 (LYIT…FWLF). The MtN3/slv 1 domain occupies 6 to 90 (LLSGACIVFT…GAYLLYSPER (85 aa)). A MtN3/slv 2 domain is found at 124–206 (QLGLFCSVFT…RFWLFSQFPP (83 aa)).

Belongs to the SWEET sugar transporter family.

It is found in the golgi apparatus membrane. It localises to the cell membrane. Functionally, mediates sugar transport across membranes. The protein is Sugar transporter SWEET1 (slc50a1) of Xenopus laevis (African clawed frog).